The following is a 418-amino-acid chain: Gamma-glutamyl phosphate reductase (418 aa).

The protein belongs to the gamma-glutamyl phosphate reductase family.

It is found in the cytoplasm. It carries out the reaction L-glutamate 5-semialdehyde + phosphate + NADP(+) = L-glutamyl 5-phosphate + NADPH + H(+). The protein operates within amino-acid biosynthesis; L-proline biosynthesis; L-glutamate 5-semialdehyde from L-glutamate: step 2/2. Functionally, catalyzes the NADPH-dependent reduction of L-glutamate 5-phosphate into L-glutamate 5-semialdehyde and phosphate. The product spontaneously undergoes cyclization to form 1-pyrroline-5-carboxylate. This Teredinibacter turnerae (strain ATCC 39867 / T7901) protein is Gamma-glutamyl phosphate reductase.